The primary structure comprises 202 residues: Small ribosomal subunit protein uS2 (202 aa).

The protein belongs to the universal ribosomal protein uS2 family.

The sequence is that of Small ribosomal subunit protein uS2 from Methanocorpusculum labreanum (strain ATCC 43576 / DSM 4855 / Z).